We begin with the raw amino-acid sequence, 620 residues long: Pentatricopeptide repeat-containing protein At5g66520 (620 aa).

10 PPR repeats span residues 79–113 (DTFL…SAPH), 114–148 (NAYT…GYEN), 149–179 (DVYA…IPEP), 180–210 (DDVS…MAEK), 211–245 (NAIS…DVEP), 246–280 (DNVS…RIRM), 281–311 (DSVL…IKKK), 312–346 (SVQA…GIKP), 347–382 (NVIT…NLKP), and 383–413 (TIEH…MPLK). The tract at residues 418–493 (IWGALLKACR…VPGCSTISLE (76 aa)) is type E motif. A type E(+) motif region spans residues 494–524 (GTTHEFLAGDRSHPEIEKIQSKWRIMRRKLE). The segment at 525-620 (ENGYVPELEE…DGKCSCGDYW (96 aa)) is type DYW motif.

It belongs to the PPR family. PCMP-H subfamily.

In Arabidopsis thaliana (Mouse-ear cress), this protein is Pentatricopeptide repeat-containing protein At5g66520 (PCMP-H61).